We begin with the raw amino-acid sequence, 310 residues long: uncharacterized protein (310 aa).

Residues 269 to 307 adopt a coiled-coil conformation; it reads DLAELERKKSLAEIHKKAAMAKKREEKKKIKQELKKSAK. Residues 290-304 are compositionally biased toward basic and acidic residues; the sequence is KKREEKKKIKQELKK. The interval 290–310 is disordered; that stretch reads KKREEKKKIKQELKKSAKGKK.

This is an uncharacterized protein from Magallana gigas (Pacific oyster).